We begin with the raw amino-acid sequence, 249 residues long: Ubiquinone/menaquinone biosynthesis C-methyltransferase UbiE (249 aa).

S-adenosyl-L-methionine contacts are provided by residues threonine 74, aspartate 93, and 121 to 122 (DA).

The protein belongs to the class I-like SAM-binding methyltransferase superfamily. MenG/UbiE family.

It catalyses the reaction a 2-demethylmenaquinol + S-adenosyl-L-methionine = a menaquinol + S-adenosyl-L-homocysteine + H(+). It carries out the reaction a 2-methoxy-6-(all-trans-polyprenyl)benzene-1,4-diol + S-adenosyl-L-methionine = a 5-methoxy-2-methyl-3-(all-trans-polyprenyl)benzene-1,4-diol + S-adenosyl-L-homocysteine + H(+). It participates in quinol/quinone metabolism; menaquinone biosynthesis; menaquinol from 1,4-dihydroxy-2-naphthoate: step 2/2. The protein operates within cofactor biosynthesis; ubiquinone biosynthesis. Its function is as follows. Methyltransferase required for the conversion of demethylmenaquinol (DMKH2) to menaquinol (MKH2) and the conversion of 2-polyprenyl-6-methoxy-1,4-benzoquinol (DDMQH2) to 2-polyprenyl-3-methyl-6-methoxy-1,4-benzoquinol (DMQH2). The protein is Ubiquinone/menaquinone biosynthesis C-methyltransferase UbiE of Acidiphilium cryptum (strain JF-5).